A 179-amino-acid chain; its full sequence is Protein YjaZ (179 aa).

This is Protein YjaZ from Escherichia coli (strain K12).